The following is a 242-amino-acid chain: Octanoyltransferase (242 aa).

Positions 31–206 (SQTTDEIWFL…LFLKNFGYNQ (176 aa)) constitute a BPL/LPL catalytic domain. Residues 70–77 (RGGQVTYH), 137–139 (SIG), and 150–152 (GLA) each bind substrate. Cys168 acts as the Acyl-thioester intermediate in catalysis.

The protein belongs to the LipB family.

It is found in the cytoplasm. The enzyme catalyses octanoyl-[ACP] + L-lysyl-[protein] = N(6)-octanoyl-L-lysyl-[protein] + holo-[ACP] + H(+). It functions in the pathway protein modification; protein lipoylation via endogenous pathway; protein N(6)-(lipoyl)lysine from octanoyl-[acyl-carrier-protein]: step 1/2. Functionally, catalyzes the transfer of endogenously produced octanoic acid from octanoyl-acyl-carrier-protein onto the lipoyl domains of lipoate-dependent enzymes. Lipoyl-ACP can also act as a substrate although octanoyl-ACP is likely to be the physiological substrate. This chain is Octanoyltransferase, found in Coxiella burnetii (strain CbuG_Q212) (Coxiella burnetii (strain Q212)).